Consider the following 705-residue polypeptide: Elongation factor G (705 aa).

One can recognise a tr-type G domain in the interval 8–290 (ERYRNFGIMA…GVVHLLPSPA (283 aa)). GTP contacts are provided by residues 17–24 (AHIDAGKT), 88–92 (DTPGH), and 142–145 (NKMD). Positions 290-309 (ADRPPVQGIDEDEKEDTRAA) are disordered.

Belongs to the TRAFAC class translation factor GTPase superfamily. Classic translation factor GTPase family. EF-G/EF-2 subfamily.

The protein resides in the cytoplasm. Functionally, catalyzes the GTP-dependent ribosomal translocation step during translation elongation. During this step, the ribosome changes from the pre-translocational (PRE) to the post-translocational (POST) state as the newly formed A-site-bound peptidyl-tRNA and P-site-bound deacylated tRNA move to the P and E sites, respectively. Catalyzes the coordinated movement of the two tRNA molecules, the mRNA and conformational changes in the ribosome. This Xanthomonas oryzae pv. oryzae (strain MAFF 311018) protein is Elongation factor G.